We begin with the raw amino-acid sequence, 323 residues long: MKPENKIPVLTRLSDEMKAVVNFQQPGLPPWPADGDIETQRQYYLLERRFWNADAPSMTTRTCAVPTPYGDVTTRLYSPQPTSQATLYYLHGGGFILGNLDTHDRIMRLLARYTGCTVIGIDYSLSPQARYPQAIEETVAVCSYFSQHADEYSLNVEKIGFAGDSAGAMLALASALWLRDKHIRCGNLIAILLWYGLYGLQDSVSRRLFGGAWDGLTREDLDMYEKAYLRNDEDRESPWYCLFNNDLTRDVPPCFIASAEFDPLIDDSRLLHQTLQAHQQPCEYKMYPGTLHAFLHYSRMMTIADDALQDGARFFMARMKTPR.

The short motif at 91–93 (HGG) is the Involved in the stabilization of the negatively charged intermediate by the formation of the oxyanion hole element. Catalysis depends on residues serine 165, aspartate 262, and histidine 292.

The protein belongs to the 'GDXG' lipolytic enzyme family. Homodimer. Interacts with MalT and MelA.

The protein localises to the cytoplasm. Its function is as follows. Displays esterase activity towards short chain fatty esters (acyl chain length of up to 8 carbons). Able to hydrolyze triacetylglycerol (triacetin) and tributyrylglycerol (tributyrin), but not trioleylglycerol (triolein) or cholesterol oleate. Negatively regulates MalT activity by antagonizing maltotriose binding. Inhibits MelA galactosidase activity. In Salmonella choleraesuis (strain SC-B67), this protein is Acetyl esterase.